Consider the following 175-residue polypeptide: Crossover junction endodeoxyribonuclease RuvC (175 aa).

Catalysis depends on residues Asp8, Glu67, and Asp139. Mg(2+) is bound by residues Asp8, Glu67, and Asp139.

The protein belongs to the RuvC family. Homodimer which binds Holliday junction (HJ) DNA. The HJ becomes 2-fold symmetrical on binding to RuvC with unstacked arms; it has a different conformation from HJ DNA in complex with RuvA. In the full resolvosome a probable DNA-RuvA(4)-RuvB(12)-RuvC(2) complex forms which resolves the HJ. The cofactor is Mg(2+).

The protein localises to the cytoplasm. It catalyses the reaction Endonucleolytic cleavage at a junction such as a reciprocal single-stranded crossover between two homologous DNA duplexes (Holliday junction).. Its function is as follows. The RuvA-RuvB-RuvC complex processes Holliday junction (HJ) DNA during genetic recombination and DNA repair. Endonuclease that resolves HJ intermediates. Cleaves cruciform DNA by making single-stranded nicks across the HJ at symmetrical positions within the homologous arms, yielding a 5'-phosphate and a 3'-hydroxyl group; requires a central core of homology in the junction. The consensus cleavage sequence is 5'-(A/T)TT(C/G)-3'. Cleavage occurs on the 3'-side of the TT dinucleotide at the point of strand exchange. HJ branch migration catalyzed by RuvA-RuvB allows RuvC to scan DNA until it finds its consensus sequence, where it cleaves and resolves the cruciform DNA. This Marinobacter nauticus (strain ATCC 700491 / DSM 11845 / VT8) (Marinobacter aquaeolei) protein is Crossover junction endodeoxyribonuclease RuvC.